The primary structure comprises 68 residues: Intracellular calcium channel modulator CCP-Ts (68 aa).

Positions 1–23 (MNPKLLIVIGLLLATGVCSFAKA) are cleaved as a signal peptide. Cystine bridges form between Cys-33/Cys-47, Cys-40/Cys-53, and Cys-46/Cys-62.

Belongs to the scorpion calcin-like family. Expressed by the venom gland. In intravenously injected mice, the labeled toxin has preference for heart, liver and lungs.

It is found in the secreted. It localises to the nucleus. Functionally, cell penetrating peptide (CPP) that increases intracellular calcium release through the activation of nuclear inositol 1,4,5-trisphosphate receptors (ITPR) of cardiomyocytes, thereby causing an increase in the contraction frequency of these cells. In vivo, this toxin is not lethal to mice, hovewer anti-CPP serum reduces venom lethality, suggesting that this toxin is lethal when it acts in synergy with other venom components. The protein is Intracellular calcium channel modulator CCP-Ts of Tityus serrulatus (Brazilian scorpion).